A 341-amino-acid polypeptide reads, in one-letter code: L-threonine 3-dehydrogenase (341 aa).

Zn(2+) is bound at residue Cys38. Active-site charge relay system residues include Thr40 and His43. Residues His63, Glu64, Cys93, Cys96, Cys99, and Cys107 each coordinate Zn(2+). Residues Ile175, Asp195, Arg200, 262–264, and 286–287 each bind NAD(+); these read LGI and IY.

The protein belongs to the zinc-containing alcohol dehydrogenase family. As to quaternary structure, homotetramer. The cofactor is Zn(2+).

The protein resides in the cytoplasm. It carries out the reaction L-threonine + NAD(+) = (2S)-2-amino-3-oxobutanoate + NADH + H(+). The protein operates within amino-acid degradation; L-threonine degradation via oxydo-reductase pathway; glycine from L-threonine: step 1/2. Its function is as follows. Catalyzes the NAD(+)-dependent oxidation of L-threonine to 2-amino-3-ketobutyrate. This chain is L-threonine 3-dehydrogenase, found in Shigella boydii serotype 4 (strain Sb227).